A 491-amino-acid polypeptide reads, in one-letter code: Aspartyl/glutamyl-tRNA(Asn/Gln) amidotransferase subunit B (491 aa).

It belongs to the GatB/GatE family. GatB subfamily. Heterotrimer of A, B and C subunits.

The enzyme catalyses L-glutamyl-tRNA(Gln) + L-glutamine + ATP + H2O = L-glutaminyl-tRNA(Gln) + L-glutamate + ADP + phosphate + H(+). It catalyses the reaction L-aspartyl-tRNA(Asn) + L-glutamine + ATP + H2O = L-asparaginyl-tRNA(Asn) + L-glutamate + ADP + phosphate + 2 H(+). Functionally, allows the formation of correctly charged Asn-tRNA(Asn) or Gln-tRNA(Gln) through the transamidation of misacylated Asp-tRNA(Asn) or Glu-tRNA(Gln) in organisms which lack either or both of asparaginyl-tRNA or glutaminyl-tRNA synthetases. The reaction takes place in the presence of glutamine and ATP through an activated phospho-Asp-tRNA(Asn) or phospho-Glu-tRNA(Gln). This is Aspartyl/glutamyl-tRNA(Asn/Gln) amidotransferase subunit B from Parasynechococcus marenigrum (strain WH8102).